The chain runs to 156 residues: uncharacterized protein (156 aa).

The next 5 membrane-spanning stretches (helical) occupy residues 6–26 (LIVLISFLIFYLSIFLAPYFA), 34–54 (FWKFISICLYAVYSLICHQMP), 68–88 (CARCFGIYTGVLVGMIIYPFI), 100–120 (WYLIIALIPMAVDGTTQLIGL), and 129–149 (FITGFIAGFTVVFYILPIFFE).

The protein resides in the cell membrane. This is an uncharacterized protein from Methanocaldococcus jannaschii (strain ATCC 43067 / DSM 2661 / JAL-1 / JCM 10045 / NBRC 100440) (Methanococcus jannaschii).